A 127-amino-acid chain; its full sequence is Glycine cleavage system H protein 1 (127 aa).

The Lipoyl-binding domain occupies 20–101 (SVTVGITPYA…LGAGWFFRFI (82 aa)). The residue at position 60 (K60) is an N6-lipoyllysine.

Belongs to the GcvH family. The glycine cleavage system is composed of four proteins: P, T, L and H. (R)-lipoate is required as a cofactor.

The glycine cleavage system catalyzes the degradation of glycine. The H protein shuttles the methylamine group of glycine from the P protein to the T protein. The sequence is that of Glycine cleavage system H protein 1 from Pseudomonas syringae pv. tomato (strain ATCC BAA-871 / DC3000).